A 184-amino-acid chain; its full sequence is 2-C-methyl-D-erythritol 2,4-cyclodiphosphate synthase (184 aa).

2 residues coordinate a divalent metal cation: D17 and H19. 4-CDP-2-C-methyl-D-erythritol 2-phosphate is bound by residues 17-19 (DVH) and 47-48 (HS). Residue H55 coordinates a divalent metal cation. 4-CDP-2-C-methyl-D-erythritol 2-phosphate-binding positions include 74 to 78 (FPNTD), F152, and R155.

Belongs to the IspF family. Homotrimer. A divalent metal cation is required as a cofactor.

It catalyses the reaction 4-CDP-2-C-methyl-D-erythritol 2-phosphate = 2-C-methyl-D-erythritol 2,4-cyclic diphosphate + CMP. The protein operates within isoprenoid biosynthesis; isopentenyl diphosphate biosynthesis via DXP pathway; isopentenyl diphosphate from 1-deoxy-D-xylulose 5-phosphate: step 4/6. Involved in the biosynthesis of isopentenyl diphosphate (IPP) and dimethylallyl diphosphate (DMAPP), two major building blocks of isoprenoid compounds. Catalyzes the conversion of 4-diphosphocytidyl-2-C-methyl-D-erythritol 2-phosphate (CDP-ME2P) to 2-C-methyl-D-erythritol 2,4-cyclodiphosphate (ME-CPP) with a corresponding release of cytidine 5-monophosphate (CMP). This is 2-C-methyl-D-erythritol 2,4-cyclodiphosphate synthase from Anaplasma marginale (strain St. Maries).